The sequence spans 610 residues: UvrABC system protein C (610 aa).

The GIY-YIG domain occupies 16 to 94 (SQPGVYRMYD…IKLYQPRYNV (79 aa)). The region spanning 204–239 (DQVLTQLIARMEKASQDLAFEEAARIRDQIQAVRRV) is the UVR domain.

It belongs to the UvrC family. As to quaternary structure, interacts with UvrB in an incision complex.

Its subcellular location is the cytoplasm. Functionally, the UvrABC repair system catalyzes the recognition and processing of DNA lesions. UvrC both incises the 5' and 3' sides of the lesion. The N-terminal half is responsible for the 3' incision and the C-terminal half is responsible for the 5' incision. In Salmonella typhi, this protein is UvrABC system protein C.